Here is a 298-residue protein sequence, read N- to C-terminus: GTP cyclohydrolase FolE2 (298 aa).

Belongs to the GTP cyclohydrolase IV family.

The enzyme catalyses GTP + H2O = 7,8-dihydroneopterin 3'-triphosphate + formate + H(+). The protein operates within cofactor biosynthesis; 7,8-dihydroneopterin triphosphate biosynthesis; 7,8-dihydroneopterin triphosphate from GTP: step 1/1. Converts GTP to 7,8-dihydroneopterin triphosphate. This is GTP cyclohydrolase FolE2 from Pseudomonas fluorescens (strain Pf0-1).